Consider the following 178-residue polypeptide: Bifunctional protein PyrR (178 aa).

Substrate contacts are provided by residues 42 to 43, Arg83, 103 to 111, Arg136, and Val160; these read TR and DDVIYKGRT. The PRPP-binding motif lies at 99–111; the sequence is VVLVDDVIYKGRT.

Belongs to the purine/pyrimidine phosphoribosyltransferase family. PyrR subfamily.

The enzyme catalyses UMP + diphosphate = 5-phospho-alpha-D-ribose 1-diphosphate + uracil. In terms of biological role, regulates the transcription of the pyrimidine nucleotide (pyr) operon in response to exogenous pyrimidines. Also displays a weak uracil phosphoribosyltransferase activity which is not physiologically significant. The polypeptide is Bifunctional protein PyrR (Synechocystis sp. (strain ATCC 27184 / PCC 6803 / Kazusa)).